Reading from the N-terminus, the 179-residue chain is MIDSEGYRANVGIVITNDKQQVLLAKRLKQDSWQLPQGGIDFGESELDALFRELNEEIGLSFEHISILAKTPKWLRYDFPDYHIKHKQKPVCIGQKQVWFLLRLISNENNIKLNMHTQVEFDDWAWVDYWRPIEDVIDFKKPIYEDMLKALAPVLFNNQHKIPNQYLRPLKCSAIILDK.

Residues 6–149 form the Nudix hydrolase domain; that stretch reads GYRANVGIVI…KKPIYEDMLK (144 aa). The Nudix box signature appears at 38–59; that stretch reads GGIDFGESELDALFRELNEEIG.

It belongs to the Nudix hydrolase family. RppH subfamily. A divalent metal cation is required as a cofactor.

Accelerates the degradation of transcripts by removing pyrophosphate from the 5'-end of triphosphorylated RNA, leading to a more labile monophosphorylated state that can stimulate subsequent ribonuclease cleavage. In Ruthia magnifica subsp. Calyptogena magnifica, this protein is RNA pyrophosphohydrolase.